The primary structure comprises 89 residues: MANNPSSKKRARQQVKRRAHNMSLRSMVRTYIKKVSAQIEQGSYDGATQALTTAAPIIDSMVNKGIFSKNKAARTKSRLNAKIKALKAS.

It belongs to the bacterial ribosomal protein bS20 family.

Its function is as follows. Binds directly to 16S ribosomal RNA. The sequence is that of Small ribosomal subunit protein bS20 from Hahella chejuensis (strain KCTC 2396).